An 847-amino-acid polypeptide reads, in one-letter code: Vacuolar membrane protease (847 aa).

Over 1-17 (MQFGKSLLKHVYTRTFK) the chain is Cytoplasmic. A helical membrane pass occupies residues 18-38 (SSLTCSIFAFTLLMIFFVLDW). The Vacuolar segment spans residues 39 to 348 (KRMNVYPRLD…GSYWQINLNL (310 aa)). Positions 146 and 158 each coordinate Zn(2+). The active-site Proton acceptor is Glu-190. Residue Glu-191 coordinates Zn(2+). An N-linked (GlcNAc...) asparagine glycan is attached at Asn-208. A Zn(2+)-binding site is contributed by Glu-216. The N-linked (GlcNAc...) asparagine glycan is linked to Asn-274. His-291 is a binding site for Zn(2+). Residues 349-369 (HLFLNVVFLIACPAILFMCLF) traverse the membrane as a helical segment. Residues 370-381 (RFPSLYAQLKKP) lie on the Cytoplasmic side of the membrane. The helical transmembrane segment at 382-402 (CYLICFTLSSLFVLIFDYVVV) threads the bilayer. Topologically, residues 403-415 (QSLTKLNPYVIHS) are vacuolar. Residues 416-436 (SPDAVLAFFFLTNLLGLVYSF) traverse the membrane as a helical segment. Residues 437-454 (RYVATHSRMSNEELSCIE) lie on the Cytoplasmic side of the membrane. The helical transmembrane segment at 455 to 475 (IVLIWYVSMFWYISLLIATLT) threads the bilayer. Over 476–482 (SIVRGLG) the chain is Vacuolar. The chain crosses the membrane as a helical span at residues 483–503 (SLYFVNFGFFCSFFCCILTLI). Residues 504-560 (RVRYFVDRMVTINRPANPEQMPLVQSTSGNAYGTSRYPQHRLKAVVSKSASVKLNDN) lie on the Cytoplasmic side of the membrane. A helical membrane pass occupies residues 561–581 (LWSVLFFSCLVPLPLFTCYNL). Residues 582 to 605 (LSEVFIPAVHQSLIDGPYSNTCYK) lie on the Vacuolar side of the membrane. The helical transmembrane segment at 606 to 626 (FAVILVFMAIINSSPFVFRAL) threads the bilayer. The Cytoplasmic segment spans residues 627–630 (SKKS). Residues 631-651 (SAILLMLWVSLLFNILRAEPF) traverse the membrane as a helical segment. Topologically, residues 652 to 847 (NEKAPIKFRV…LLKMSKTHVM (196 aa)) are vacuolar. Asn-726, Asn-734, Asn-800, and Asn-834 each carry an N-linked (GlcNAc...) asparagine glycan.

The protein belongs to the peptidase M28 family. The cofactor is Zn(2+).

It is found in the vacuole membrane. In terms of biological role, may be involved in vacuolar sorting and osmoregulation. The sequence is that of Vacuolar membrane protease from Schizosaccharomyces japonicus (strain yFS275 / FY16936) (Fission yeast).